We begin with the raw amino-acid sequence, 264 residues long: NFAT activation molecule 1 (264 aa).

Positions 1–37 (MESWLLRRGARVRCLHPPSWLPAWCFLCLLPVPQTLQ) are cleaved as a signal peptide. The Extracellular portion of the chain corresponds to 38–159 (LTGLVSLTHT…QPPAFKVQEA (122 aa)). Residues 49–145 (LPIMVSLANT…QSDGVVILVR (97 aa)) form the Ig-like V-type domain. Cys-64 and Cys-110 are disulfide-bonded. N-linked (GlcNAc...) asparagine glycans are attached at residues Asn-105 and Asn-118. Residues 160–180 (LMLGFTSLMSVLGVLGTALLL) form a helical membrane-spanning segment. The Cytoplasmic segment spans residues 181 to 264 (WKKKQISVLG…NEFNLVYENL (84 aa)). One can recognise an ITAM domain in the interval 212–232 (ESVYTSLQRRETEVYACMKEE). Residues Tyr-215 and Tyr-226 each carry the phosphotyrosine modification.

No direct interaction with the B-cell antigen receptor (BCR). Interacts with SYK; probably involved in BCR signaling. Interacts with ZAP70. Post-translationally, N-glycosylated. In terms of tissue distribution, highly expressed in the spleen, expressed by both B- and CD4+ and CD8+ T-cells, as well as non-T- and non-B-cells, including macrophages and neutrophils. Expressed at low levels, if any, in non-immune tissue.

Its subcellular location is the cell membrane. In terms of biological role, may function in immune system as a receptor which activates via the calcineurin/NFAT-signaling pathway the downstream cytokine gene promoters. Activates the transcription of IL-13 and TNF-alpha promoters. May be involved in the regulation of B-cell, but not T-cell, development. The chain is NFAT activation molecule 1 (Nfam1) from Mus musculus (Mouse).